The chain runs to 332 residues: Malate dehydrogenase, cytoplasmic (332 aa).

Residues 16–17 (QI), D43, and G90 each bind NAD(+). Oxaloacetate is bound at residue R99. 2 residues coordinate NAD(+): Q113 and N132. Residues N132, R163, H188, and S243 each coordinate oxaloacetate. Residue H188 is the Proton acceptor of the active site.

It belongs to the LDH/MDH superfamily. MDH type 2 family. Homodimer.

It localises to the cytoplasm. The catalysed reaction is (S)-malate + NAD(+) = oxaloacetate + NADH + H(+). In Mesembryanthemum crystallinum (Common ice plant), this protein is Malate dehydrogenase, cytoplasmic (MDH).